We begin with the raw amino-acid sequence, 89 residues long: Small ribosomal subunit protein uS15 (89 aa).

Residues 1–21 (MSITPERKQEMIKDYATKEGD) show a composition bias toward basic and acidic residues. Residues 1–23 (MSITPERKQEMIKDYATKEGDTG) are disordered.

This sequence belongs to the universal ribosomal protein uS15 family. In terms of assembly, part of the 30S ribosomal subunit. Forms a bridge to the 50S subunit in the 70S ribosome, contacting the 23S rRNA.

Its function is as follows. One of the primary rRNA binding proteins, it binds directly to 16S rRNA where it helps nucleate assembly of the platform of the 30S subunit by binding and bridging several RNA helices of the 16S rRNA. Forms an intersubunit bridge (bridge B4) with the 23S rRNA of the 50S subunit in the ribosome. This Rhodospirillum rubrum (strain ATCC 11170 / ATH 1.1.1 / DSM 467 / LMG 4362 / NCIMB 8255 / S1) protein is Small ribosomal subunit protein uS15.